Here is a 1048-residue protein sequence, read N- to C-terminus: uncharacterized protein (1048 aa).

The interval 601 to 629 (ENQINEEQQTNVENEQQTEQQFENEDKET) is disordered. Positions 605–621 (NEEQQTNVENEQQTEQQ) are enriched in low complexity.

This is an uncharacterized protein from Methanocaldococcus jannaschii (strain ATCC 43067 / DSM 2661 / JAL-1 / JCM 10045 / NBRC 100440) (Methanococcus jannaschii).